Here is a 159-residue protein sequence, read N- to C-terminus: Transcription elongation factor GreA (159 aa).

It belongs to the GreA/GreB family.

Functionally, necessary for efficient RNA polymerase transcription elongation past template-encoded arresting sites. The arresting sites in DNA have the property of trapping a certain fraction of elongating RNA polymerases that pass through, resulting in locked ternary complexes. Cleavage of the nascent transcript by cleavage factors such as GreA or GreB allows the resumption of elongation from the new 3'terminus. GreA releases sequences of 2 to 3 nucleotides. In Orientia tsutsugamushi (strain Boryong) (Rickettsia tsutsugamushi), this protein is Transcription elongation factor GreA.